The chain runs to 235 residues: UPF0749 protein YlxX (235 aa).

A helical membrane pass occupies residues 6 to 26; sequence SFISISVLMVIFGLMISVQFN.

This sequence belongs to the UPF0749 family.

The protein localises to the cell membrane. The chain is UPF0749 protein YlxX (ylxX) from Bacillus subtilis (strain 168).